Here is a 426-residue protein sequence, read N- to C-terminus: D-tagatose-1,6-bisphosphate aldolase subunit KbaZ (426 aa).

The protein belongs to the GatZ/KbaZ family. KbaZ subfamily. Forms a complex with KbaY.

It participates in carbohydrate metabolism; D-tagatose 6-phosphate degradation; D-glyceraldehyde 3-phosphate and glycerone phosphate from D-tagatose 6-phosphate: step 2/2. Component of the tagatose-1,6-bisphosphate aldolase KbaYZ that is required for full activity and stability of the Y subunit. Could have a chaperone-like function for the proper and stable folding of KbaY. When expressed alone, KbaZ does not show any aldolase activity. This is D-tagatose-1,6-bisphosphate aldolase subunit KbaZ from Escherichia coli O127:H6 (strain E2348/69 / EPEC).